The primary structure comprises 1114 residues: Kinesin-like protein KIN-12B (1114 aa).

A disordered region spans residues 1 to 119; sequence MRSLFSSKLS…GGGGGDSGVQ (119 aa). Residues 98–107 are compositionally biased toward low complexity; sequence SAASPAPEGA. The 343-residue stretch at 117 to 459 folds into the Kinesin motor domain; sequence GVQVVVRVRP…LRFAHRAKDI (343 aa). Residue 197-204 coordinates ATP; that stretch reads GQTGSGKT. Coiled coils occupy residues 772–810 and 999–1043; these read VLSA…KNQL and ELLV…DQEV. Over residues 1055 to 1065 the composition is skewed to polar residues; it reads LPSNVVQSPEP. The tract at residues 1055–1081 is disordered; that stretch reads LPSNVVQSPEPSETGPARYDTGGSFGD.

It belongs to the TRAFAC class myosin-kinesin ATPase superfamily. Kinesin family. KIN-12 subfamily.

This chain is Kinesin-like protein KIN-12B, found in Oryza sativa subsp. japonica (Rice).